The primary structure comprises 296 residues: Polyadenylate-binding protein 2 (296 aa).

The segment at 1–102 (MAAVSSAASL…EEEPGELTGD (102 aa)) is disordered. Gly residues-rich tracts occupy residues 19–31 (LRGGAGPSGGGQD) and 71–82 (GRGGSGGGGAGG). Positions 84-97 (EELEDEELEEEEPG) are enriched in acidic residues. The stretch at 107 to 141 (DPELEAIKARVREMEEEAEKLKELQNEVEKQMNMS) forms a coiled coil. Positions 146-296 (NAGPVIMSIE…ARVTSWYTPY (151 aa)) are necessary for homooligomerization. In terms of domain architecture, RRM spans 163–240 (RSIYVGNVDY…RQIKVVPKRT (78 aa)).

Monomer and homooligomer. Binds RNA as a monomer and oligomerizes when bound to poly(A).

Its subcellular location is the nucleus. The protein resides in the cytoplasm. In terms of biological role, involved in the 3'-end formation of mRNA precursors (pre-mRNA) by the addition of a poly(A) tail of 200-250 nt to the upstream cleavage product. Stimulates poly(A) polymerase (PAPOLA) conferring processivity on the poly(A) tail elongation reaction and also controls the poly(A) tail length. Increases the affinity of poly(A) polymerase for RNA. Binds to poly(A) and to poly(G) with high affinity. May protect the poly(A) tail from degradation. The protein is Polyadenylate-binding protein 2 of Xenopus tropicalis (Western clawed frog).